Reading from the N-terminus, the 211-residue chain is Ribosomal RNA small subunit methyltransferase G (211 aa).

S-adenosyl-L-methionine contacts are provided by residues Gly76, Leu81, 127–128 (VE), and Arg142.

It belongs to the methyltransferase superfamily. RNA methyltransferase RsmG family.

The protein localises to the cytoplasm. It carries out the reaction guanosine(527) in 16S rRNA + S-adenosyl-L-methionine = N(7)-methylguanosine(527) in 16S rRNA + S-adenosyl-L-homocysteine. In terms of biological role, specifically methylates the N7 position of guanine in position 527 of 16S rRNA. This is Ribosomal RNA small subunit methyltransferase G from Vibrio vulnificus (strain CMCP6).